We begin with the raw amino-acid sequence, 562 residues long: Protein TBF1 (562 aa).

Residues 376 to 414 (ASMSNSSSGPHSSHNNSSNSNNNGSIGLRKPKAKRTWSK) form a disordered region. The span at 377–400 (SMSNSSSGPHSSHNNSSNSNNNGS) shows a compositional bias: low complexity. One can recognise an HTH myb-type domain in the interval 404 to 460 (RKPKAKRTWSKEEEEALVEGLKEVGPSWSKILDLYGPGGKITENLKNRTQVQLKDKA). Residues 431-456 (WSKILDLYGPGGKITENLKNRTQVQL) constitute a DNA-binding region (H-T-H motif). A disordered region spans residues 495-562 (FSQSPNSSTI…GFDPHLEDGM (68 aa)). Polar residues-rich tracts occupy residues 496–522 (SQSP…ATED) and 532–552 (GQNS…SDNT).

In terms of assembly, homodimer.

The protein localises to the nucleus. It localises to the chromosome. Its subcellular location is the telomere. Its function is as follows. Binds the telomeric double-stranded TTAGGG repeat and negatively regulates telomere length. Involved in the regulation of gene expression. 52 binding sites have been identified, distributed over 15 chromosomes. A member of the general regulatory factors (GRFs) which act as genome partitioners. Acts as a chromatin insulator which are known as STARs (Subtelomeric anti-silencing region). STARs prevent negative or positive transcription influence by extending across chromatin to a promoter. This is Protein TBF1 (TBF1) from Saccharomyces cerevisiae (strain ATCC 204508 / S288c) (Baker's yeast).